The following is a 1054-amino-acid chain: MKQASAIPQPKTYGPLKNLPHLEKEQLSQSLWRIADELGPIFRFDFPGVSSVFVSGHNLVAEVCDEKRFDKNLGKGLQKVREFGGDGLFTSWTHEPNWQKAHRILLPSFSQKAMKGYHSMMLDIATQLIQKWSRLNPNEEIDVADDMTRLTLDTIGLCGFNYRFNSFYRDSQHPFITSMLRALKEAMNQSKRLGLQDKMMVKTKLQFQKDIEVMNSLVDRMIAERKANPDENIKDLLSLMLYAKDPVTGETLDDENIRYQIITFLIAGHETTSGLLSFAIYCLLTHPEKLKKAQEEADRVLTDDTPEYKQIQQLKYIRMVLNETLRLYPTAPAFSLYAKEDTVLGGEYPISKGQPVTVLIPKLHRDQNAWGPDAEDFRPERFEDPSSIPHHAYKPFGNGQRACIGMQFALQEATMVLGLVLKHFELINHTGYELKIKEALTIKPDDFKITVKPRKTAAINVQRKEQADIKAETKPKETKPKHGTPLLVLFGSNLGTAEGIAGELAAQGRQMGFTAETAPLDDYIGKLPEEGAVVIVTASYNGAPPDNAAGFVEWLKELEEGQLKGVSYAVFGCGNRSWASTYQRIPRLIDDMMKAKGASRLTAIGEGDAADDFESHRESWENRFWKETMDAFDINEIAQKEDRPSLSITFLSEATETPVAKAYGAFEGIVLENRELQTAASTRSTRHIELEIPAGKTYKEGDHIGILPKNSRELVQRVLSRFGLQSNHVIKVSGSAHMAHLPMDRPIKVVDLLSSYVELQEPASRLQLRELASYTVCPPHQKELEQLVSDDGIYKEQVLAKRLTMLDFLEDYPACEMPFERFLALLPSLKPRYYSISSSPKVHANIVSMTVGVVKASAWSGRGEYRGVASNYLAELNTGDAAACFIRTPQSGFQMPNDPETPMIMVGPGTGIAPFRGFIQARSVLKKEGSTLGEALLYFGCRRPDHDDLYREELDQAEQDGLVTIRRCYSRVENEPKGYVQHLLKQDTQKLMTLIEKGAHIYVCGDGSQMAPDVERTLRLAYEAEKAASQEESAVWLQKLQDQRRYVKDVWTGM.

The segment at 1 to 475 (MKQASAIPQP…QADIKAETKP (475 aa)) is cytochrome P450. Cys-403 provides a ligand contact to heme. A compositionally biased stretch (basic and acidic residues) spans 462-480 (QRKEQADIKAETKPKETKP). A disordered region spans residues 462–482 (QRKEQADIKAETKPKETKPKH). Positions 476-1053 (KETKPKHGTP…RRYVKDVWTG (578 aa)) are NADPH--P450 reductase. In terms of domain architecture, Flavodoxin-like spans 486–625 (LLVLFGSNLG…HRESWENRFW (140 aa)). FMN contacts are provided by residues 492–497 (SNLGTA), 539–542 (SYNG), 573–575 (CGN), and 581–583 (TYQ). In terms of domain architecture, FAD-binding FR-type spans 663–896 (YGAFEGIVLE…RTPQSGFQMP (234 aa)).

The protein in the N-terminal section; belongs to the cytochrome P450 family. Requires FAD as cofactor. The cofactor is FMN. It depends on heme b as a cofactor.

The protein localises to the cytoplasm. The catalysed reaction is an organic molecule + reduced [NADPH--hemoprotein reductase] + O2 = an alcohol + oxidized [NADPH--hemoprotein reductase] + H2O + H(+). It carries out the reaction 2 oxidized [cytochrome P450] + NADPH = 2 reduced [cytochrome P450] + NADP(+) + H(+). Functions as a fatty acid monooxygenase. Catalyzes hydroxylation of a range of medium to long-chain fatty acids, with a preference for long-chain unsaturated and branched-chain fatty acids over saturated fatty acids. Hydroxylation of myristic acid occurs mainly at the omega-2 and omega-3 positions, in approximately equal proportions. Also displays a NADPH-dependent reductase activity in the C-terminal domain, which allows electron transfer from NADPH to the heme iron of the cytochrome P450 N-terminal domain. The sequence is that of Bifunctional cytochrome P450/NADPH--P450 reductase 2 from Bacillus subtilis (strain 168).